A 182-amino-acid polypeptide reads, in one-letter code: Isopentenyl-diphosphate Delta-isomerase (182 aa).

Histidine 25 and histidine 32 together coordinate Mn(2+). The 135-residue stretch at 30–164 (LLHLAFSSWL…PWAFSPWMVM (135 aa)) folds into the Nudix hydrolase domain. The active site involves cysteine 67. Histidine 69 contacts Mn(2+). Glutamate 87 is a binding site for Mg(2+). The Mn(2+) site is built by glutamate 114 and glutamate 116. Glutamate 116 is a catalytic residue.

The protein belongs to the IPP isomerase type 1 family. In terms of assembly, homodimer. Mg(2+) serves as cofactor. It depends on Mn(2+) as a cofactor.

It is found in the cytoplasm. The enzyme catalyses isopentenyl diphosphate = dimethylallyl diphosphate. The protein operates within isoprenoid biosynthesis; dimethylallyl diphosphate biosynthesis; dimethylallyl diphosphate from isopentenyl diphosphate: step 1/1. Its function is as follows. Catalyzes the 1,3-allylic rearrangement of the homoallylic substrate isopentenyl (IPP) to its highly electrophilic allylic isomer, dimethylallyl diphosphate (DMAPP). The polypeptide is Isopentenyl-diphosphate Delta-isomerase (Escherichia coli O127:H6 (strain E2348/69 / EPEC)).